A 256-amino-acid polypeptide reads, in one-letter code: Probable aquaporin TIP4-2 (256 aa).

A run of 5 helical transmembrane segments spans residues 25–45 (AVAGELLFTFLFVFIGVASTI), 59–79 (AVTAAAMAQALVVAVLATAGF), 86–108 (LNPAVTLSLAVGGHITLFRSALY), 146–166 (GVAAEAVFTFTLLLVICATIL), and 178–198 (PLLTGLLVGANTVAGGALTGA). An NPA 1 motif is present at residues 87 to 89 (NPA). Residues 201–203 (NPA) carry the NPA 2 motif. The helical transmembrane segment at 220–240 (VYWVGPLAGGPLAVVAYELLF) threads the bilayer.

Belongs to the MIP/aquaporin (TC 1.A.8) family. TIP (TC 1.A.8.10) subfamily. In terms of tissue distribution, expressed in roots, leaves and anthers.

The protein localises to the vacuole membrane. In terms of biological role, aquaporins facilitate the transport of water and small neutral solutes across cell membranes. May be involved in transport from the vacuolar compartment to the cytoplasm. The chain is Probable aquaporin TIP4-2 (TIP4-2) from Oryza sativa subsp. japonica (Rice).